The following is a 954-amino-acid chain: Protein translocase subunit SecA (954 aa).

ATP is bound by residues Gln-86, 104–108 (GEGKT), and Asp-494. Residues 520–549 (LDPDNPLGSASTTSRGGGQGFGPASPKPKK) are disordered.

Belongs to the SecA family. In terms of assembly, monomer and homodimer. Part of the essential Sec protein translocation apparatus which comprises SecA, SecYEG and auxiliary proteins SecDF. Other proteins may also be involved.

The protein resides in the cell inner membrane. Its subcellular location is the cellular thylakoid membrane. The protein localises to the cytoplasm. It catalyses the reaction ATP + H2O + cellular proteinSide 1 = ADP + phosphate + cellular proteinSide 2.. In terms of biological role, part of the Sec protein translocase complex. Interacts with the SecYEG preprotein conducting channel. Has a central role in coupling the hydrolysis of ATP to the transfer of proteins into and across the cell membrane, serving as an ATP-driven molecular motor driving the stepwise translocation of polypeptide chains across the membrane. Its function is as follows. Probably participates in protein translocation into and across both the cytoplasmic and thylakoid membranes in cyanobacterial cells. The chain is Protein translocase subunit SecA from Synechococcus sp. (strain JA-3-3Ab) (Cyanobacteria bacterium Yellowstone A-Prime).